We begin with the raw amino-acid sequence, 189 residues long: Movement protein (189 aa).

It belongs to the tombusvirus/aureusvirus movement protein p22 family.

It localises to the host membrane. Functionally, transports viral genome to neighboring plant cells directly through plasmosdesmata, without any budding. The movement protein allows efficient cell to cell propagation, by bypassing the host cell wall barrier. The protein is Movement protein of Artichoke mottled crinkle virus (AMCV).